A 348-amino-acid polypeptide reads, in one-letter code: MASPAIRLTQYSHGAGCGCKISPKVLDKILHTEQQKFFDPRLLVGNETRDDAAVYDIGNGVGIISTTDFFMPIVDDPFDFGRIAATNAISDVYAMGGKPIMAIAILGWPIDKLAPEIAQQVIEGGRYVCQQAGISLAGGHSIDAPEPILGLAVTGIVSTEQVKKNSAAKPGCKLFLTKPLGIGILTTAEKKSKLRPEHRGLATETMCQLNKPGADFAHIPGVTAMTDVTGFGLLGHLSEICQGSGVQAILHYSAIPRLPAVEDYIAEGCVPGGTGRNFDSYGHLIGNMSDLQKQLLCDPQTSGGLLLAVLPDAEADVQAIAAQHGMTLSPIGELTSADSRRALIEIVV.

Cys17 is a catalytic residue. ATP is bound by residues Lys20 and 48 to 50 (TRD). Asp51 is a binding site for Mg(2+). ATP contacts are provided by residues Asp68, Asp91, and 139-141 (GHS). Mg(2+) is bound at residue Asp91. Asp227 is a binding site for Mg(2+).

This sequence belongs to the selenophosphate synthase 1 family. Class I subfamily. In terms of assembly, homodimer. The cofactor is Mg(2+).

It carries out the reaction hydrogenselenide + ATP + H2O = selenophosphate + AMP + phosphate + 2 H(+). Its function is as follows. Synthesizes selenophosphate from selenide and ATP. This is Selenide, water dikinase from Yersinia pestis.